Here is a 359-residue protein sequence, read N- to C-terminus: DNA-directed RNA polymerase subunit alpha (359 aa).

The segment at Met1–Asn226 is alpha N-terminal domain (alpha-NTD). Positions Ala241 to Leu359 are alpha C-terminal domain (alpha-CTD). Residues Phe315 to Leu359 form a disordered region. The segment covering Asn345–Leu359 has biased composition (acidic residues).

It belongs to the RNA polymerase alpha chain family. Homodimer. The RNAP catalytic core consists of 2 alpha, 1 beta, 1 beta' and 1 omega subunit. When a sigma factor is associated with the core the holoenzyme is formed, which can initiate transcription.

The enzyme catalyses RNA(n) + a ribonucleoside 5'-triphosphate = RNA(n+1) + diphosphate. Functionally, DNA-dependent RNA polymerase catalyzes the transcription of DNA into RNA using the four ribonucleoside triphosphates as substrates. The sequence is that of DNA-directed RNA polymerase subunit alpha from Saccharopolyspora erythraea (strain ATCC 11635 / DSM 40517 / JCM 4748 / NBRC 13426 / NCIMB 8594 / NRRL 2338).